The chain runs to 535 residues: Inositol 1,4,5-trisphosphate receptor-interacting protein-like 2 (535 aa).

The first 32 residues, 1-32 (MSVRYTLNLRVFWPLVTGLCTALVCLYHALRS), serve as a signal peptide directing secretion. Residues 33–43 (SEDARAESPDG) lie on the Extracellular side of the membrane. Residues 44-64 (ADSGFPLLKVAILLLLGYILL) traverse the membrane as a helical segment. Topologically, residues 65–535 (RCRHAIRQRL…RIQGSPEDEP (471 aa)) are cytoplasmic. A Phosphoserine modification is found at S139.

The protein belongs to the ITPRIP family.

The protein resides in the membrane. This chain is Inositol 1,4,5-trisphosphate receptor-interacting protein-like 2 (Itpripl2), found in Mus musculus (Mouse).